The primary structure comprises 63 residues: Large ribosomal subunit protein uL29 (63 aa).

The protein belongs to the universal ribosomal protein uL29 family.

This is Large ribosomal subunit protein uL29 from Baumannia cicadellinicola subsp. Homalodisca coagulata.